A 407-amino-acid chain; its full sequence is MANEYKKILLLKGLELMDEYHFIIIKSLLAYDLGLTTKMQEEYNRIKISDLMEKKFQGVACVDKLIELAKDMPPLKNLVNNLRKERSKVARKMKAQGVVLMKKINQEEVGLVAPAPTARNTLTSEVGERIPVAQKRKTLSKGKTEAKRIKVPQEQSEPPHPSGASTSAATDHPPLPHTSSSTPSNTSFAQNQQTQAQCQVDTRRNVPQKDPVTVMVLKATAPFKYESPEHGKSTMFHATVASKTQYFHVKVFDISLKEKFIRKKVITISDYSECKGVMEIKEASSVSDFDQNFEVPNRIIEIANKTPKISQLYKQASGTMVYGLFMVQKKSIHKKNTIYEIKDNTGSMDVVGNGKWHNIKCEKGDKLRLFCFQLRTVNRKLKLVCGSHSFIKVIKAKKNKEGSMNVN.

One can recognise a Pyrin domain in the interval 1–88 (MANEYKKILL…VNNLRKERSK (88 aa)). The tract at residues 122 to 211 (LTSEVGERIP…TRRNVPQKDP (90 aa)) is disordered. The short motif at 131 to 137 (PVAQKRK) is the Nuclear localization signal element. Over residues 177-199 (HTSSSTPSNTSFAQNQQTQAQCQ) the composition is skewed to low complexity. The 199-residue stretch at 196 to 394 (AQCQVDTRRN…CGSHSFIKVI (199 aa)) folds into the HIN-200 domain.

As to quaternary structure, participates in a ternary complex with YY1 and the YY1 target DNA element. Binds nucleolin and nucleophosmin/NPM/B23.

Its subcellular location is the nucleus. It is found in the cytoplasm. May act as a transcriptional activator/repressor in the myeloid lineage. Plays a role in the granulocyte/monocyte cell-specific response to interferon. Stimulates the DNA binding of the transcriptional repressor protein YY1. The chain is Myeloid cell nuclear differentiation antigen (MNDA) from Macaca fascicularis (Crab-eating macaque).